The primary structure comprises 109 residues: Elicitor peptide 2 (109 aa).

Positions Met1–Arg73 are excised as a propeptide. The span at Asp74 to Ser88 shows a compositional bias: basic and acidic residues. The interval Asp74–Asp109 is disordered.

This sequence belongs to the brassicaceae elicitor peptide family.

Functionally, elicitor of plant defense. This Arabidopsis thaliana (Mouse-ear cress) protein is Elicitor peptide 2 (PEP2).